A 1127-amino-acid polypeptide reads, in one-letter code: Elongation factor-like GTPase 1 (1127 aa).

Residues Ala-17 to Tyr-272 form the tr-type G domain. Residues Ala-26–Thr-33, Asp-92–His-96, and Asn-146–Asp-149 contribute to the GTP site. The disordered stretch occupies residues Lys-429–Ser-496. Composition is skewed to basic and acidic residues over residues Met-438–Lys-452 and Ser-474–Glu-484. An N6-acetyllysine modification is found at Lys-528.

This sequence belongs to the TRAFAC class translation factor GTPase superfamily. Classic translation factor GTPase family. Associates with the 60S ribosomal subunit. Found in a complex consisting of the 60S ribosomal subunit, SBDS and EFL1.

The catalysed reaction is GTP + H2O = GDP + phosphate + H(+). Its activity is regulated as follows. GTPase activity is stimulated in the presence of 60S ribosome subunits. In terms of biological role, GTPase involved in the biogenesis of the 60S ribosomal subunit and translational activation of ribosomes. Together with SBDS, triggers the GTP-dependent release of EIF6 from 60S pre-ribosomes in the cytoplasm, thereby activating ribosomes for translation competence by allowing 80S ribosome assembly and facilitating EIF6 recycling to the nucleus, where it is required for 60S rRNA processing and nuclear export. This chain is Elongation factor-like GTPase 1 (Efl1), found in Mus musculus (Mouse).